The following is a 356-amino-acid chain: Arginine kinase Lit v 2 (356 aa).

The Phosphagen kinase N-terminal domain maps to 9–91 (KLEAGFKKLE…FDPIIEDYHV (83 aa)). Residue 64-68 (GVGIY) coordinates L-arginine. In terms of domain architecture, Phosphagen kinase C-terminal spans 119–356 (FVISTRVRCG…LELIKMEKEM (238 aa)). Residues 122 to 126 (STRVR) and histidine 185 each bind ATP. Glutamate 225 lines the L-arginine pocket. Arginine 229 contributes to the ATP binding site. Cysteine 271 serves as a coordination point for L-arginine. ATP-binding positions include 280-284 (RASVH) and 309-314 (RGTRGE). L-arginine is bound at residue glutamate 314.

This sequence belongs to the ATP:guanido phosphotransferase family. In terms of tissue distribution, expressed in muscle (at protein level). Expressed in muscle, heart, nerve, stomach and hemocytes, with the highest expression in muscle. Very low expression in eyestalk and intestine. Not expressed in hepatopancreas, gill and skin.

The catalysed reaction is L-arginine + ATP = N(omega)-phospho-L-arginine + ADP + H(+). No change in activity after supplementation with 10 mM glucose. However, activity decreases significantly when glucose concentration is higher than 50 mM and almost all activity is lost with 200 mM glucose. Activity is significantly increased after treatment with 10 mM and 50 mM ATP. However, activity drops significantly with 200 mM ATP. Inhibited by 10-200 mM alpha-ketoglutarate. No change in activity after incubation with 10-200 mM L-citrulline, L-ornaline or glycerol. In terms of biological role, catalyzes the reversible transfer of high energy ATP gamma-phosphate group to L-arginine. In Penaeus vannamei (Whiteleg shrimp), this protein is Arginine kinase Lit v 2.